A 386-amino-acid chain; its full sequence is 8-amino-7-oxononanoate synthase (386 aa).

R23 contacts substrate. 110-111 (GY) lines the pyridoxal 5'-phosphate pocket. H135 contacts substrate. Pyridoxal 5'-phosphate-binding residues include S181, H209, and T236. N6-(pyridoxal phosphate)lysine is present on K239. T354 contacts substrate.

It belongs to the class-II pyridoxal-phosphate-dependent aminotransferase family. BioF subfamily. In terms of assembly, homodimer. The cofactor is pyridoxal 5'-phosphate.

It catalyses the reaction 6-carboxyhexanoyl-[ACP] + L-alanine + H(+) = (8S)-8-amino-7-oxononanoate + holo-[ACP] + CO2. The protein operates within cofactor biosynthesis; biotin biosynthesis. In terms of biological role, catalyzes the decarboxylative condensation of pimeloyl-[acyl-carrier protein] and L-alanine to produce 8-amino-7-oxononanoate (AON), [acyl-carrier protein], and carbon dioxide. This Thiobacillus denitrificans (strain ATCC 25259 / T1) protein is 8-amino-7-oxononanoate synthase.